Reading from the N-terminus, the 482-residue chain is MKGLFLRIITALALLFWAIDMVFPWQFLRHTEENHYAAIQSRGALYVGTINNQISYFTNNDGERGFEYELAKAFADSLGVELEMKTFDNQEQLFDELDKHNIDLAAAHILYHPKNAERFQIGPAYHSASWQLAYRKNENRPKNLGNVKKDIYISNNLALEETLKELQKQYPQLTWKRNQTLTQEELLLQLAEGKIPYVIANSIDIAAMQQIKPELAIAFDITDEANVHWYLPNKSYHDLQTALLNFMNNAEETGLLDNLKEKYLGHISQFDYVDTRSYMNAIENTLPQYSPLFEKYQGELDWRLLAAVAYQESHWDPHATSPTGVRGIMMLTKNTAQHMKISDRTNPEQSIKAGSEYLHWLISQLPESIEKEEKIWFALVAYNIGLGHLIDARRLTQNLGGNPDNWLDVKKNLPLLAEKRYYSQLKYGYARGYEAYQYVENIRRYMNSIVNYHRVQENQIINDNASNESAVKNLEEIKENKD.

The signal sequence occupies residues 1-13 (MKGLFLRIITALA). The tract at residues 14–267 (LLFWAIDMVF…NLKEKYLGHI (254 aa)) is non-LT domain. Residues 268 to 482 (SQFDYVDTRS…NLEEIKENKD (215 aa)) form an LT domain region. Glu-312 is a catalytic residue.

This sequence in the N-terminal section; belongs to the bacterial solute-binding protein 3 family. In the C-terminal section; belongs to the transglycosylase Slt family.

The protein resides in the cell outer membrane. It carries out the reaction Exolytic cleavage of the (1-&gt;4)-beta-glycosidic linkage between N-acetylmuramic acid (MurNAc) and N-acetylglucosamine (GlcNAc) residues in peptidoglycan, from either the reducing or the non-reducing ends of the peptidoglycan chains, with concomitant formation of a 1,6-anhydrobond in the MurNAc residue.. Functionally, murein-degrading enzyme that degrades murein glycan strands and insoluble, high-molecular weight murein sacculi, with the concomitant formation of a 1,6-anhydromuramoyl product. Lytic transglycosylases (LTs) play an integral role in the metabolism of the peptidoglycan (PG) sacculus. Their lytic action creates space within the PG sacculus to allow for its expansion as well as for the insertion of various structures such as secretion systems and flagella. This is Membrane-bound lytic murein transglycosylase F from Haemophilus influenzae (strain PittEE).